Consider the following 298-residue polypeptide: Probable endonuclease 4 (298 aa).

9 residues coordinate Zn(2+): His-69, His-111, Glu-146, Asp-180, His-183, His-215, Asp-228, His-230, and Glu-260.

The protein belongs to the AP endonuclease 2 family. It depends on Zn(2+) as a cofactor.

It carries out the reaction Endonucleolytic cleavage to 5'-phosphooligonucleotide end-products.. Endonuclease IV plays a role in DNA repair. It cleaves phosphodiester bonds at apurinic or apyrimidinic (AP) sites, generating a 3'-hydroxyl group and a 5'-terminal sugar phosphate. The chain is Probable endonuclease 4 from Bacillus cereus (strain 03BB102).